The chain runs to 886 residues: Probable mixed-linked glucan synthase 8 (886 aa).

2 consecutive transmembrane segments (helical) span residues 87-107 (ILLH…VLFF) and 118-138 (GMFF…SWLL). The active site involves aspartate 213. Substrate is bound by residues aspartate 413 and aspartate 415. The active site involves aspartate 577. A run of 6 helical transmembrane segments spans residues 659 to 679 (VFLL…IFYI), 683 to 703 (FPTY…IGMV), 723 to 743 (IIGA…KCFG), 775 to 795 (LLFP…AAIG), 812 to 832 (LGLV…LGIM), and 840 to 860 (YILF…DIAI).

The protein belongs to the glycosyltransferase 2 family. Plant cellulose synthase-like F subfamily.

It localises to the golgi apparatus membrane. Its function is as follows. May catalyze both beta-1,3 and beta-1,4 glycosidic linkage on beta-D-glucan. Essential for (1,3;1,4)-beta-D-glucans synthesis in grasses and cereals (Poaceae). The mixed-linked glucans (which are not present in walls of dicotyledons or most other monocotyledonous plants) are particularly important constituents of the walls of the starchy endosperm and aleurone cells of cereal grains such as oats, wheat, rice and barley. They can account for up to 70% by weight of the wall. In Oryza sativa subsp. japonica (Rice), this protein is Probable mixed-linked glucan synthase 8 (CSFL8).